Here is a 661-residue protein sequence, read N- to C-terminus: MANLPPRKVTSASKSKQDVSPLQILLQMGFRRQRALKALAATGNRSVQLASDWLLTHVSDSNIDADDPREYIFYASPTGPLLSQLLEFWDKSKSTCGWNGAHNFLPHITLVSFFKAPDDTSLNLAKAVRQVVENVGDPPKCTLKLEPYVSHNFMGLFISEEHAEYLKKIAVQYVKQVSSVSSINLEAHVKSLHITLAYHFEESSYEDLKTLVEEMQPVEHSSWELRLYSRDPRFANHQVYKVTQGYSPQASDELELVLGDYIYIEEKEFDISPDGWVHGTSWLTGLNGYLPAVYTRRTAETDAWTLLKAVSLGNNCSDCKSESGSNTDSEMAGTYPHEDAADLAYKKSEETYQEWDKYWSEVMNSRSDSILTITQGLPMNWELSKAAEEMKNNITNGTSKSRRWVFALRHGERVDLTYGPWVPHCFENDTYVRKDLNLPLKLAHRAGGKGGYVKDTPLTRLGWFQAQLVGEGMRMAGVSIKHVYASPALRCVETAQGFLDGLRADPSVKIKVEPGLFEFKNWHMPKGIDFMTPIELCKAGLNVDMTYKPYVEMDASAETMDEFFKRGEVAMQAAVNDTEKDGGNVIFIGHAITLDQMVGALHRLRDDMEDVQPYEIGRNLLKVPYCALGAMRGKPWDVVSPPCPPSINSSSGRFDWRILIK.

The region spanning 16–57 (KQDVSPLQILLQMGFRRQRALKALAATGNRSVQLASDWLLTH) is the UBA domain. The SH3 domain occupies 235 to 300 (ANHQVYKVTQ…PAVYTRRTAE (66 aa)). R409 is an active-site residue. H410 (tele-phosphohistidine intermediate) is an active-site residue. H590 is an active-site residue.

In terms of assembly, homodimer. In terms of tissue distribution, detected in non-diapause eggs, with highest expression between 2 and 5 days after oviposition. Not detected in other tissues tested.

It localises to the cytoplasm. Its subcellular location is the cytosol. The enzyme catalyses ecdysone 22-phosphate + H2O = ecdysone + phosphate. It carries out the reaction 20-hydroxyecdysone 22-phosphate + H2O = 20-hydroxyecdysone + phosphate. It catalyses the reaction 2-deoxyecdysone 22-phosphate + H2O = 2-deoxyecdysone + phosphate. The catalysed reaction is O-phospho-L-tyrosyl-[protein] + H2O = L-tyrosyl-[protein] + phosphate. With respect to regulation, competitively inhibited by 4-nitrophenyl phosphate (para-nitrophenylphosphate, pNPP). Also inhibited by tungstate, vanadate, and phosphate. Functionally, steroid phosphatase which catalyzes the conversion of inactive phosphorylated ecdysteroids into their active forms. Shows high activity towards ecdysone 22-phosphate (E22P). Has lower activity towards other ecdysteriod phosphates including 20-hydroxyecdysone 22-phosphate (20E22P) and 2-deoxyecdysone 22-phosphate (2dE22P). Also has protein tyrosine phosphatase activity. The sequence is that of Ecdysteroid-phosphate phosphatase from Bombyx mori (Silk moth).